The chain runs to 232 residues: MKHDHFVVQSPDKPAQQLLLLFHGVGDNPVAMGEIGNWFAPLFPDALVVSVGGAEPSGNPAGRQWFSVQGITEDNRQARVDAIMPTFIETVRYWQKQSGVGANATALIGFSQGAIMVLESIKAEPGLASRVIAFNGRYASLPETASTATTIHLIHGGEDPVIDLAHAVAAQEALISAGGDVTLDIVEDLGHAIDNRSMQFALDHLRYTIPKHYFDEALSGGKPGDDDVIEMM.

Residues serine 111, aspartate 159, and histidine 191 each act as charge relay system in the active site.

The protein belongs to the AB hydrolase superfamily. AB hydrolase 2 family.

Displays esterase activity toward palmitoyl-CoA and pNP-butyrate. The sequence is that of Esterase YpfH (ypfH) from Escherichia coli (strain K12).